The following is a 232-amino-acid chain: Large ribosomal subunit protein uL1 (232 aa).

It belongs to the universal ribosomal protein uL1 family. Part of the 50S ribosomal subunit.

Its function is as follows. Binds directly to 23S rRNA. The L1 stalk is quite mobile in the ribosome, and is involved in E site tRNA release. Functionally, protein L1 is also a translational repressor protein, it controls the translation of the L11 operon by binding to its mRNA. This is Large ribosomal subunit protein uL1 from Burkholderia cenocepacia (strain HI2424).